Consider the following 351-residue polypeptide: Glycerol-1-phosphate dehydrogenase [NAD(P)+] (351 aa).

NAD(+) contacts are provided by residues 98–102 and 120–123; these read GSIID and TTAS. Asp-125 lines the substrate pocket. Ser-129 provides a ligand contact to NAD(+). Asp-172 is a substrate binding site. Zn(2+)-binding residues include Asp-172 and His-252. Residue His-256 coordinates substrate. Zn(2+) is bound at residue His-268.

The protein belongs to the glycerol-1-phosphate dehydrogenase family. It depends on Zn(2+) as a cofactor.

The protein localises to the cytoplasm. The enzyme catalyses sn-glycerol 1-phosphate + NAD(+) = dihydroxyacetone phosphate + NADH + H(+). The catalysed reaction is sn-glycerol 1-phosphate + NADP(+) = dihydroxyacetone phosphate + NADPH + H(+). The protein operates within membrane lipid metabolism; glycerophospholipid metabolism. Functionally, catalyzes the NAD(P)H-dependent reduction of dihydroxyacetonephosphate (DHAP or glycerone phosphate) to glycerol 1-phosphate (G1P). The G1P thus generated is used as the glycerophosphate backbone of phospholipids in the cellular membranes of Archaea. In Thermococcus kodakarensis (strain ATCC BAA-918 / JCM 12380 / KOD1) (Pyrococcus kodakaraensis (strain KOD1)), this protein is Glycerol-1-phosphate dehydrogenase [NAD(P)+].